A 944-amino-acid chain; its full sequence is Protein translocase subunit SecA (944 aa).

Residues Gln-87, 105-109, and Asp-494 each bind ATP; that span reads GEGKT. Positions 894-944 are disordered; it reads HAAAAGDGEEKPRPKQETVVRTQPKVGRNDPCPCGSGKKYKKCHGATEAAV. Basic and acidic residues predominate over residues 901 to 911; the sequence is GEEKPRPKQET. 4 residues coordinate Zn(2+): Cys-925, Cys-927, Cys-936, and His-937.

The protein belongs to the SecA family. Monomer and homodimer. Part of the essential Sec protein translocation apparatus which comprises SecA, SecYEG and auxiliary proteins SecDF-YajC and YidC. The cofactor is Zn(2+).

The protein localises to the cell inner membrane. It is found in the cytoplasm. It catalyses the reaction ATP + H2O + cellular proteinSide 1 = ADP + phosphate + cellular proteinSide 2.. Its function is as follows. Part of the Sec protein translocase complex. Interacts with the SecYEG preprotein conducting channel. Has a central role in coupling the hydrolysis of ATP to the transfer of proteins into and across the cell membrane, serving as an ATP-driven molecular motor driving the stepwise translocation of polypeptide chains across the membrane. The polypeptide is Protein translocase subunit SecA (Anaeromyxobacter sp. (strain Fw109-5)).